Consider the following 143-residue polypeptide: Trypsin inhibitor CMc (143 aa).

An N-terminal signal peptide occupies residues 1-24; it reads MASCSQHLLSAVAIFSVLAGVATA.

Belongs to the protease inhibitor I6 (cereal trypsin/alpha-amylase inhibitor) family. In terms of tissue distribution, endosperm.

Its subcellular location is the secreted. Its function is as follows. Trypsin inhibitor. No alpha-amylase inhibition detected. This Hordeum vulgare (Barley) protein is Trypsin inhibitor CMc (ITR2).